Reading from the N-terminus, the 314-residue chain is DNA-directed RNA polymerase subunit alpha (314 aa).

An alpha N-terminal domain (alpha-NTD) region spans residues 1 to 228; it reads MIEIEKPKIE…EHLNIFVGLT (228 aa). The tract at residues 245 to 314 is alpha C-terminal domain (alpha-CTD); the sequence is KEKVLEMTIE…ELGLGLRKDD (70 aa).

It belongs to the RNA polymerase alpha chain family. In terms of assembly, homodimer. The RNAP catalytic core consists of 2 alpha, 1 beta, 1 beta' and 1 omega subunit. When a sigma factor is associated with the core the holoenzyme is formed, which can initiate transcription.

It catalyses the reaction RNA(n) + a ribonucleoside 5'-triphosphate = RNA(n+1) + diphosphate. In terms of biological role, DNA-dependent RNA polymerase catalyzes the transcription of DNA into RNA using the four ribonucleoside triphosphates as substrates. The sequence is that of DNA-directed RNA polymerase subunit alpha from Bacillus licheniformis (strain ATCC 14580 / DSM 13 / JCM 2505 / CCUG 7422 / NBRC 12200 / NCIMB 9375 / NCTC 10341 / NRRL NRS-1264 / Gibson 46).